Consider the following 129-residue polypeptide: Small ribosomal subunit protein uS11c (129 aa).

The protein belongs to the universal ribosomal protein uS11 family. In terms of assembly, part of the 30S ribosomal subunit.

It localises to the plastid. The protein resides in the chloroplast. This is Small ribosomal subunit protein uS11c from Rhodomonas salina (Cryptomonas salina).